The following is a 180-amino-acid chain: Crossover junction endodeoxyribonuclease RuvC (180 aa).

Catalysis depends on residues D7, E66, and D138. 3 residues coordinate Mg(2+): D7, E66, and D138.

Belongs to the RuvC family. In terms of assembly, homodimer which binds Holliday junction (HJ) DNA. The HJ becomes 2-fold symmetrical on binding to RuvC with unstacked arms; it has a different conformation from HJ DNA in complex with RuvA. In the full resolvosome a probable DNA-RuvA(4)-RuvB(12)-RuvC(2) complex forms which resolves the HJ. It depends on Mg(2+) as a cofactor.

The protein resides in the cytoplasm. The enzyme catalyses Endonucleolytic cleavage at a junction such as a reciprocal single-stranded crossover between two homologous DNA duplexes (Holliday junction).. The RuvA-RuvB-RuvC complex processes Holliday junction (HJ) DNA during genetic recombination and DNA repair. Endonuclease that resolves HJ intermediates. Cleaves cruciform DNA by making single-stranded nicks across the HJ at symmetrical positions within the homologous arms, yielding a 5'-phosphate and a 3'-hydroxyl group; requires a central core of homology in the junction. The consensus cleavage sequence is 5'-(A/T)TT(C/G)-3'. Cleavage occurs on the 3'-side of the TT dinucleotide at the point of strand exchange. HJ branch migration catalyzed by RuvA-RuvB allows RuvC to scan DNA until it finds its consensus sequence, where it cleaves and resolves the cruciform DNA. The protein is Crossover junction endodeoxyribonuclease RuvC of Burkholderia pseudomallei (strain 1710b).